A 458-amino-acid chain; its full sequence is ATP synthase subunit beta (458 aa).

Residue 148-155 (GGAGVGKT) coordinates ATP.

Belongs to the ATPase alpha/beta chains family. In terms of assembly, F-type ATPases have 2 components, CF(1) - the catalytic core - and CF(0) - the membrane proton channel. CF(1) has five subunits: alpha(3), beta(3), gamma(1), delta(1), epsilon(1). CF(0) has three main subunits: a(1), b(2) and c(9-12). The alpha and beta chains form an alternating ring which encloses part of the gamma chain. CF(1) is attached to CF(0) by a central stalk formed by the gamma and epsilon chains, while a peripheral stalk is formed by the delta and b chains.

The protein resides in the cell inner membrane. It carries out the reaction ATP + H2O + 4 H(+)(in) = ADP + phosphate + 5 H(+)(out). Its function is as follows. Produces ATP from ADP in the presence of a proton gradient across the membrane. The catalytic sites are hosted primarily by the beta subunits. This Francisella tularensis subsp. holarctica (strain FTNF002-00 / FTA) protein is ATP synthase subunit beta.